Here is a 143-residue protein sequence, read N- to C-terminus: Ribosome-binding factor A (143 aa).

The segment at 123–143 is disordered; sequence DKSLQENYKQNDKETKAEKLR.

Belongs to the RbfA family. As to quaternary structure, monomer. Binds 30S ribosomal subunits, but not 50S ribosomal subunits or 70S ribosomes.

It is found in the cytoplasm. In terms of biological role, one of several proteins that assist in the late maturation steps of the functional core of the 30S ribosomal subunit. Associates with free 30S ribosomal subunits (but not with 30S subunits that are part of 70S ribosomes or polysomes). Required for efficient processing of 16S rRNA. May interact with the 5'-terminal helix region of 16S rRNA. In Francisella tularensis subsp. mediasiatica (strain FSC147), this protein is Ribosome-binding factor A.